The primary structure comprises 134 residues: Phosphoribosyl-AMP cyclohydrolase (134 aa).

D80 contributes to the Mg(2+) binding site. C81 contacts Zn(2+). D82 and D84 together coordinate Mg(2+). Residues C98 and C105 each contribute to the Zn(2+) site.

This sequence belongs to the PRA-CH family. In terms of assembly, homodimer. It depends on Mg(2+) as a cofactor. The cofactor is Zn(2+).

It localises to the cytoplasm. The catalysed reaction is 1-(5-phospho-beta-D-ribosyl)-5'-AMP + H2O = 1-(5-phospho-beta-D-ribosyl)-5-[(5-phospho-beta-D-ribosylamino)methylideneamino]imidazole-4-carboxamide. It functions in the pathway amino-acid biosynthesis; L-histidine biosynthesis; L-histidine from 5-phospho-alpha-D-ribose 1-diphosphate: step 3/9. Functionally, catalyzes the hydrolysis of the adenine ring of phosphoribosyl-AMP. This is Phosphoribosyl-AMP cyclohydrolase from Bordetella petrii (strain ATCC BAA-461 / DSM 12804 / CCUG 43448).